Reading from the N-terminus, the 153-residue chain is Ribonuclease H (153 aa).

Positions 1–142 constitute an RNase H type-1 domain; that stretch reads MTPEVVIYTD…ADALARKGLS (142 aa). 4 residues coordinate Mg(2+): Asp-10, Glu-48, Asp-70, and Asp-134.

Belongs to the RNase H family. As to quaternary structure, monomer. It depends on Mg(2+) as a cofactor.

The protein resides in the cytoplasm. It catalyses the reaction Endonucleolytic cleavage to 5'-phosphomonoester.. Functionally, endonuclease that specifically degrades the RNA of RNA-DNA hybrids. This Phenylobacterium zucineum (strain HLK1) protein is Ribonuclease H.